Here is a 228-residue protein sequence, read N- to C-terminus: Cytochrome c oxidase subunit 2 (228 aa).

The Mitochondrial intermembrane portion of the chain corresponds to 1 to 14 (MAYPLQLGLQDASS). The helical transmembrane segment at 15-45 (PIMEELTNFHDHTLMIVFLISSLVLYLISLM) threads the bilayer. Topologically, residues 46 to 59 (LTTKLIHTSTMDAQ) are mitochondrial matrix. The helical transmembrane segment at 60–87 (EVETIWTILPAIILILIALPSLRILYMM) threads the bilayer. Residues 88–228 (DEINNPVLTV…FENWSVSMTQ (141 aa)) lie on the Mitochondrial intermembrane side of the membrane. Residues histidine 161, cysteine 196, glutamate 198, cysteine 200, histidine 204, and methionine 207 each contribute to the Cu cation site. Mg(2+) is bound at residue glutamate 198.

The protein belongs to the cytochrome c oxidase subunit 2 family. As to quaternary structure, component of the cytochrome c oxidase (complex IV, CIV), a multisubunit enzyme composed of 14 subunits. The complex is composed of a catalytic core of 3 subunits MT-CO1, MT-CO2 and MT-CO3, encoded in the mitochondrial DNA, and 11 supernumerary subunits COX4I, COX5A, COX5B, COX6A, COX6B, COX6C, COX7A, COX7B, COX7C, COX8 and NDUFA4, which are encoded in the nuclear genome. The complex exists as a monomer or a dimer and forms supercomplexes (SCs) in the inner mitochondrial membrane with NADH-ubiquinone oxidoreductase (complex I, CI) and ubiquinol-cytochrome c oxidoreductase (cytochrome b-c1 complex, complex III, CIII), resulting in different assemblies (supercomplex SCI(1)III(2)IV(1) and megacomplex MCI(2)III(2)IV(2)). Found in a complex with TMEM177, COA6, COX18, COX20, SCO1 and SCO2. Interacts with TMEM177 in a COX20-dependent manner. Interacts with COX20. Interacts with COX16. It depends on Cu cation as a cofactor.

The protein localises to the mitochondrion inner membrane. The enzyme catalyses 4 Fe(II)-[cytochrome c] + O2 + 8 H(+)(in) = 4 Fe(III)-[cytochrome c] + 2 H2O + 4 H(+)(out). Component of the cytochrome c oxidase, the last enzyme in the mitochondrial electron transport chain which drives oxidative phosphorylation. The respiratory chain contains 3 multisubunit complexes succinate dehydrogenase (complex II, CII), ubiquinol-cytochrome c oxidoreductase (cytochrome b-c1 complex, complex III, CIII) and cytochrome c oxidase (complex IV, CIV), that cooperate to transfer electrons derived from NADH and succinate to molecular oxygen, creating an electrochemical gradient over the inner membrane that drives transmembrane transport and the ATP synthase. Cytochrome c oxidase is the component of the respiratory chain that catalyzes the reduction of oxygen to water. Electrons originating from reduced cytochrome c in the intermembrane space (IMS) are transferred via the dinuclear copper A center (CU(A)) of subunit 2 and heme A of subunit 1 to the active site in subunit 1, a binuclear center (BNC) formed by heme A3 and copper B (CU(B)). The BNC reduces molecular oxygen to 2 water molecules using 4 electrons from cytochrome c in the IMS and 4 protons from the mitochondrial matrix. The polypeptide is Cytochrome c oxidase subunit 2 (MT-CO2) (Meriones shawi (Shaw's jird)).